The primary structure comprises 318 residues: Cephalosporin-C deacetylase (318 aa).

Residue Y91 participates in substrate binding. S181 (nucleophile) is an active-site residue. Catalysis depends on charge relay system residues D269 and H298.

It belongs to the carbohydrate esterase 7 family. In terms of assembly, homohexamer.

The protein resides in the cytoplasm. It catalyses the reaction Deacetylation of xylans and xylo-oligosaccharides.. The catalysed reaction is cephalosporin C + H2O = deacetylcephalosporin C + acetate + H(+). Esterase that removed acetyl groups from a number of O-acetylated small substrates, such as acetylated xylose, short xylooligosaccharides and cephalosporin C. Has no activity towards polymeric acetylated xylan. Cannot cleave amide linkages. This Bacillus subtilis (strain 168) protein is Cephalosporin-C deacetylase (cah).